Here is a 270-residue protein sequence, read N- to C-terminus: Myeloid leukemia factor 1 (270 aa).

4 positions are modified to phosphoserine: S6, S8, S32, and S34. The interaction with COPS3 stretch occupies residues 50–125 (RARNRMGHED…VGDEPPKVFQ (76 aa)). Disordered regions lie at residues 127–148 (STQT…RDSD) and 221–247 (RSVA…AIEH). The segment covering 138–148 (KETRKALRDSD) has biased composition (basic and acidic residues).

The protein belongs to the MLF family. Interacts with CENPU. Also interacts with NRBP1/MADM, YWHAZ/14-3-3-zeta and HNRPUL2/MANP. NRBP1 recruits a serine kinase which phosphorylates both itself and MLF1. Phosphorylated MLF1 then binds to YWHAZ and is retained in the cytoplasm. Retained in the nucleus by binding to HNRPUL2. Binds to COPS3/CSN3 which is required for suppression of COP1 and activation of p53. In terms of processing, phosphorylation is required for binding to YWHAZ.

It is found in the cytoplasm. The protein localises to the nucleus. The protein resides in the cell projection. It localises to the cilium. Its subcellular location is the cytoskeleton. It is found in the cilium basal body. Involved in lineage commitment of primary hemopoietic progenitors by restricting erythroid formation and enhancing myeloid formation. Interferes with erythropoietin-induced erythroid terminal differentiation by preventing cells from exiting the cell cycle through suppression of CDKN1B/p27Kip1 levels. Suppresses COP1 activity via CSN3 which activates p53 and induces cell cycle arrest. Binds DNA and affects the expression of a number of genes so may function as a transcription factor in the nucleus. The sequence is that of Myeloid leukemia factor 1 (MLF1) from Bos taurus (Bovine).